We begin with the raw amino-acid sequence, 540 residues long: Phosphatidylinositol 4-phosphate 5-kinase type-1 beta (540 aa).

The tract at residues 1–21 (MSSAAENGEAAPGKQNEEKTY) is disordered. The 371-residue stretch at 25–395 (ASSAIKGAIQ…RFLKFMNSRV (371 aa)) folds into the PIPK domain. Residues Ser445, Ser447, and Ser448 each carry the phosphoserine modification.

In terms of assembly, interacts with RAC1, AJUBA, PLD1, PLD2 and ARF1. As to expression, detected in heart, pancreas, brain, kidney, skeletal muscle and lung.

The protein localises to the cytoplasm. It localises to the cytosol. The protein resides in the cell membrane. Its subcellular location is the endomembrane system. The catalysed reaction is a 1,2-diacyl-sn-glycero-3-phospho-(1D-myo-inositol 4-phosphate) + ATP = a 1,2-diacyl-sn-glycero-3-phospho-(1D-myo-inositol-4,5-bisphosphate) + ADP + H(+). It catalyses the reaction 1-octadecanoyl-2-(5Z,8Z,11Z,14Z)-eicosatetraenoyl-sn-glycero-3-phospho-1D-myo-inositol 4-phosphate + ATP = 1-octadecanoyl-2-(5Z,8Z,11Z,14Z)-eicosatetraenoyl-sn-glycero-3-phospho-1D-myo-inositol 4,5-bisphosphate + ADP + H(+). It carries out the reaction 1-octadecanoyl-2-(9Z)-octadecenoyl-sn-glycero-3-phospho-1D-myo-inositol 4-phosphate + ATP = 1-octadecanoyl-2-(9Z)-octadecenoyl-sn-glycero-3-phospho-1D-myo-inositol 4,5-bisphosphate + ADP + H(+). The enzyme catalyses 1-octadecanoyl-2-(9Z)-octadecenoyl-sn-glycero-3-phospho-1D-myo-inositol + ATP = 1-octadecanoyl-2-(9Z)-octadecenoyl-sn-glycero-3-phospho-1D-myo-inositol 5-phosphate + ADP + H(+). The catalysed reaction is 1-octadecanoyl-2-(9Z,12Z)-octadecadienoyl-sn-glycero-3-phospho-1D-myo-inositol + ATP = 1-octadecanoyl-2-(9Z,12Z)-octadecadienoyl-sn-glycero-3-phospho-1D-myo-inositol 5-phosphate + ADP + H(+). It catalyses the reaction 1-octadecanoyl-2-(5Z,8Z,11Z,14Z-eicosatetraenoyl)-sn-glycero-3-phospho-(1D-myo-inositol) + ATP = 1-octadecanoyl-2-(5Z,8Z,11Z,14Z)-eicosatetraenoyl-sn-glycero-3-phospho-1D-myo-inositol 5-phosphate + ADP + H(+). It carries out the reaction 1,2-di-(9Z,12Z)-octadecadienoyl-sn-glycero-3-phospho-1D-myo-inositol + ATP = 1,2-di(9Z,12Z)-octadecadienoyl-sn-glycero-3-phospho-1D-myo-inositol 5-phosphate + ADP + H(+). In terms of biological role, catalyzes the phosphorylation of phosphatidylinositol 4-phosphate (PtdIns(4)P/PI4P) to form phosphatidylinositol 4,5-bisphosphate (PtdIns(4,5)P2/PIP2), a lipid second messenger that regulates several cellular processes such as signal transduction, vesicle trafficking, actin cytoskeleton dynamics, cell adhesion, and cell motility. PtdIns(4,5)P2 can directly act as a second messenger or can be utilized as a precursor to generate other second messengers: inositol 1,4,5-trisphosphate (IP3), diacylglycerol (DAG) or phosphatidylinositol-3,4,5-trisphosphate (PtdIns(3,4,5)P3/PIP3). Mediates RAC1-dependent reorganization of actin filaments. Contributes to the activation of phospholipase PLD2. Together with PIP5K1A, is required, after stimulation by G-protein coupled receptors, for the synthesis of IP3 that will induce stable platelet adhesion. This chain is Phosphatidylinositol 4-phosphate 5-kinase type-1 beta, found in Homo sapiens (Human).